The primary structure comprises 92 residues: Alpha-elapitoxin-Lh2a (92 aa).

An N-terminal signal peptide occupies residues 1 to 21 (MKTLLLTLVVVTIVCLDLGDS). Disulfide bonds link cysteine 24/cysteine 41, cysteine 34/cysteine 62, cysteine 47/cysteine 51, cysteine 66/cysteine 77, and cysteine 78/cysteine 83.

Belongs to the three-finger toxin family. Long-chain subfamily. Type II alpha-neurotoxin sub-subfamily. Expressed by the venom gland.

Its subcellular location is the secreted. Functionally, binds with high affinity to muscular (alpha-1/CHRNA1) and neuronal (alpha-7/CHRNA7) nicotinic acetylcholine receptor (nAChR) and inhibits acetylcholine from binding to the receptor, thereby impairing neuromuscular and neuronal transmission. The sequence is that of Alpha-elapitoxin-Lh2a from Hydrophis hardwickii (Hardwick's spine-bellied seasnake).